We begin with the raw amino-acid sequence, 104 residues long: uncharacterized protein (104 aa).

This is an uncharacterized protein from Dictyostelium discoideum (Social amoeba).